We begin with the raw amino-acid sequence, 439 residues long: L-tryptophan decarboxylase (439 aa).

Belongs to the phosphatidylserine decarboxylase family.

It carries out the reaction L-tryptophan + H(+) = tryptamine + CO2. It participates in secondary metabolite biosynthesis. In terms of biological role, L-tryptophan decarboxylase; part of the gene cluster that mediates the biosynthesis of psilocybin, a psychotropic tryptamine-derived natural product. The first step in the pathway is the decarboxylation of L-tryptophan to tryptamine by the decarboxylase psiD. 4-hydroxy-L-tryptophan is accepted as substrate by psiD as well. The cytochrome P450 monooxygenase psiH then converts tryptamine to 4-hydroxytryptamine. The kinase psiK catalyzes the 4-O-phosphorylation step by converting 4-hydroxytryptamine into norbaeocystin. The methyltransferase psiM then catalyzes iterative methyl transfer to the amino group of norbaeocystin to yield psilocybin via a monomethylated intermediate, baeocystin. 4-hydroxy-6-methyl-l-tryptophancan also be converted the decarboxylase PsiD, kinase PsiK, and methyltransferase PsiM into respectively 6-methyl-norbaeocystin, 6-methylbaeocystin, and 6-methylpsilocybin. This is L-tryptophan decarboxylase from Psilocybe cubensis (Psychedelic mushroom).